The following is a 457-amino-acid chain: Succinate-semialdehyde dehydrogenase [NADP(+)] (457 aa).

NADP(+) contacts are provided by residues tryptophan 133–asparagine 134, lysine 157–serine 160, and glycine 209–serine 210. Glutamate 231 acts as the Proton acceptor in catalysis. Position 232 (leucine 232) interacts with NADP(+). Cysteine 265 functions as the Nucleophile in the catalytic mechanism. Glutamate 362 contacts NADP(+).

The protein belongs to the aldehyde dehydrogenase family.

It carries out the reaction succinate semialdehyde + NADP(+) + H2O = succinate + NADPH + 2 H(+). Its function is as follows. Catalyzes the NADP(+)-dependent oxidation of succinate semialdehyde to succinate. It is believed to be the main source of succinate semialdehyde dehydrogenase activity in Mycobacterium. This chain is Succinate-semialdehyde dehydrogenase [NADP(+)] (gabD1), found in Mycobacterium leprae (strain TN).